The following is a 376-amino-acid chain: Nucleoside diphosphate kinase homolog 7 (376 aa).

The 89-residue stretch at 3 to 91 (HSERFVFIAE…YTARQLGSRK (89 aa)) folds into the DM10 domain.

It belongs to the NDK family. In terms of assembly, component of sperm flagellar doublet microtubules. Component of the gamma-tubulin ring complex. Post-translationally, undergoes autophosphorylation. Expressed in airway epithelial cells.

Its subcellular location is the cytoplasm. The protein resides in the cytoskeleton. The protein localises to the microtubule organizing center. It is found in the centrosome. It localises to the nucleus. Its subcellular location is the spindle. The protein resides in the cilium axoneme. The protein localises to the flagellum axoneme. It is found in the cell projection. It localises to the cilium. In terms of biological role, possesses an intrinsic kinase activity. Displays 3'-5' exonuclease activity with a preference for single-stranded DNA. Does not seem to have nucleoside diphosphate kinase activity. Functional component of the gamma-tubulin ring complex, implicated in the regulation of the microtubule-nucleating activity of the gamma-tubulin ring complex in centrosomes, in a kinase activity-dependent manner. Part of the dynein-decorated doublet microtubules (DMTs) in cilia axoneme, which is required for motile cilia beating. This Homo sapiens (Human) protein is Nucleoside diphosphate kinase homolog 7.